The sequence spans 578 residues: Probable acyl-activating enzyme 12, peroxisomal (578 aa).

Residues 576–578 carry the Microbody targeting signal motif; sequence SRL.

This sequence belongs to the ATP-dependent AMP-binding enzyme family. As to expression, expressed at low levels in leaves.

It localises to the peroxisome. May act as an acid--thiol ligase that activates carboxylic acids by forming acyl-CoAs. This Arabidopsis thaliana (Mouse-ear cress) protein is Probable acyl-activating enzyme 12, peroxisomal (AAE12).